A 456-amino-acid polypeptide reads, in one-letter code: Bifunctional protein GlmU (456 aa).

The tract at residues 1–229 (MLNNAMSVVI…LSEVEGVNNR (229 aa)) is pyrophosphorylase. Residues 11 to 14 (LAAG), K25, Q76, 81 to 82 (GT), 103 to 105 (YGD), G140, E154, N169, and N227 each bind UDP-N-acetyl-alpha-D-glucosamine. Position 105 (D105) interacts with Mg(2+). N227 is a binding site for Mg(2+). The tract at residues 230–250 (LQLSRLERVYQSEQAEKLLLA) is linker. The N-acetyltransferase stretch occupies residues 251–456 (GVMLRDPARF…EGWRRPVKKK (206 aa)). UDP-N-acetyl-alpha-D-glucosamine-binding residues include R333 and K351. The Proton acceptor role is filled by H363. Residues Y366 and N377 each contribute to the UDP-N-acetyl-alpha-D-glucosamine site. Residues A380, 386-387 (NY), S405, A423, and R440 contribute to the acetyl-CoA site.

The protein in the N-terminal section; belongs to the N-acetylglucosamine-1-phosphate uridyltransferase family. It in the C-terminal section; belongs to the transferase hexapeptide repeat family. As to quaternary structure, homotrimer. The cofactor is Mg(2+).

Its subcellular location is the cytoplasm. The catalysed reaction is alpha-D-glucosamine 1-phosphate + acetyl-CoA = N-acetyl-alpha-D-glucosamine 1-phosphate + CoA + H(+). It carries out the reaction N-acetyl-alpha-D-glucosamine 1-phosphate + UTP + H(+) = UDP-N-acetyl-alpha-D-glucosamine + diphosphate. The protein operates within nucleotide-sugar biosynthesis; UDP-N-acetyl-alpha-D-glucosamine biosynthesis; N-acetyl-alpha-D-glucosamine 1-phosphate from alpha-D-glucosamine 6-phosphate (route II): step 2/2. It participates in nucleotide-sugar biosynthesis; UDP-N-acetyl-alpha-D-glucosamine biosynthesis; UDP-N-acetyl-alpha-D-glucosamine from N-acetyl-alpha-D-glucosamine 1-phosphate: step 1/1. Its pathway is bacterial outer membrane biogenesis; LPS lipid A biosynthesis. In terms of biological role, catalyzes the last two sequential reactions in the de novo biosynthetic pathway for UDP-N-acetylglucosamine (UDP-GlcNAc). The C-terminal domain catalyzes the transfer of acetyl group from acetyl coenzyme A to glucosamine-1-phosphate (GlcN-1-P) to produce N-acetylglucosamine-1-phosphate (GlcNAc-1-P), which is converted into UDP-GlcNAc by the transfer of uridine 5-monophosphate (from uridine 5-triphosphate), a reaction catalyzed by the N-terminal domain. This is Bifunctional protein GlmU from Escherichia coli O8 (strain IAI1).